The sequence spans 335 residues: Fructose-1,6-bisphosphatase class 1 (335 aa).

Mg(2+) contacts are provided by Glu-92, Asp-114, Leu-116, and Asp-117. Substrate contacts are provided by residues 117–120 (DGSS), Asn-209, and Lys-275. Glu-281 lines the Mg(2+) pocket.

This sequence belongs to the FBPase class 1 family. As to quaternary structure, homotetramer. Mg(2+) is required as a cofactor.

The protein localises to the cytoplasm. The catalysed reaction is beta-D-fructose 1,6-bisphosphate + H2O = beta-D-fructose 6-phosphate + phosphate. The protein operates within carbohydrate biosynthesis; gluconeogenesis. The polypeptide is Fructose-1,6-bisphosphatase class 1 (Delftia acidovorans (strain DSM 14801 / SPH-1)).